We begin with the raw amino-acid sequence, 178 residues long: Large ribosomal subunit protein uL6 (178 aa).

This sequence belongs to the universal ribosomal protein uL6 family. As to quaternary structure, part of the 50S ribosomal subunit.

Its function is as follows. This protein binds to the 23S rRNA, and is important in its secondary structure. It is located near the subunit interface in the base of the L7/L12 stalk, and near the tRNA binding site of the peptidyltransferase center. This Tropheryma whipplei (strain TW08/27) (Whipple's bacillus) protein is Large ribosomal subunit protein uL6.